A 246-amino-acid polypeptide reads, in one-letter code: Phosphatidylserine decarboxylase proenzyme (246 aa).

Ser204 functions as the Schiff-base intermediate with substrate; via pyruvic acid in the catalytic mechanism. Residue Ser204 is modified to Pyruvic acid (Ser); by autocatalysis.

It belongs to the phosphatidylserine decarboxylase family. PSD-A subfamily. Heterodimer of a large membrane-associated beta subunit and a small pyruvoyl-containing alpha subunit. Pyruvate is required as a cofactor. In terms of processing, is synthesized initially as an inactive proenzyme. Formation of the active enzyme involves a self-maturation process in which the active site pyruvoyl group is generated from an internal serine residue via an autocatalytic post-translational modification. Two non-identical subunits are generated from the proenzyme in this reaction, and the pyruvate is formed at the N-terminus of the alpha chain, which is derived from the carboxyl end of the proenzyme. The post-translation cleavage follows an unusual pathway, termed non-hydrolytic serinolysis, in which the side chain hydroxyl group of the serine supplies its oxygen atom to form the C-terminus of the beta chain, while the remainder of the serine residue undergoes an oxidative deamination to produce ammonia and the pyruvoyl prosthetic group on the alpha chain.

It is found in the cell membrane. The enzyme catalyses a 1,2-diacyl-sn-glycero-3-phospho-L-serine + H(+) = a 1,2-diacyl-sn-glycero-3-phosphoethanolamine + CO2. It participates in phospholipid metabolism; phosphatidylethanolamine biosynthesis; phosphatidylethanolamine from CDP-diacylglycerol: step 2/2. Catalyzes the formation of phosphatidylethanolamine (PtdEtn) from phosphatidylserine (PtdSer). The polypeptide is Phosphatidylserine decarboxylase proenzyme (Zymomonas mobilis subsp. mobilis (strain ATCC 31821 / ZM4 / CP4)).